Reading from the N-terminus, the 494-residue chain is Sulfate adenylyltransferase subunit 1 (494 aa).

One can recognise a tr-type G domain in the interval threonine 24–glutamine 240. Residues glycine 33–serine 40 are G1. GTP is bound at residue glycine 33 to serine 40. The tract at residues glycine 91 to aspartate 95 is G2. The G3 stretch occupies residues aspartate 112–glycine 115. GTP-binding positions include aspartate 112–histidine 116 and asparagine 167–aspartate 170. The tract at residues asparagine 167 to aspartate 170 is G4. The segment at serine 204–leucine 206 is G5.

The protein belongs to the TRAFAC class translation factor GTPase superfamily. Classic translation factor GTPase family. CysN/NodQ subfamily. In terms of assembly, heterodimer composed of CysD, the smaller subunit, and CysN.

The enzyme catalyses sulfate + ATP + H(+) = adenosine 5'-phosphosulfate + diphosphate. It participates in sulfur metabolism; hydrogen sulfide biosynthesis; sulfite from sulfate: step 1/3. With CysD forms the ATP sulfurylase (ATPS) that catalyzes the adenylation of sulfate producing adenosine 5'-phosphosulfate (APS) and diphosphate, the first enzymatic step in sulfur assimilation pathway. APS synthesis involves the formation of a high-energy phosphoric-sulfuric acid anhydride bond driven by GTP hydrolysis by CysN coupled to ATP hydrolysis by CysD. This Rhizobium tropici protein is Sulfate adenylyltransferase subunit 1.